We begin with the raw amino-acid sequence, 574 residues long: Protein SIX6OS1 (574 aa).

The tract at residues 259–313 is disordered; that stretch reads KDEQVSNRSSQNSQLLLPCESQKFVRNMNSSEARVTDKKEESSANQSKFVRSDVR. Low complexity predominate over residues 264 to 275; the sequence is SNRSSQNSQLLL. A Phosphothreonine modification is found at Thr-427. The residue at position 430 (Ser-430) is a Phosphoserine. The segment at 549 to 574 is disordered; that stretch reads QDPSTMTSSSSKDFSSSQNKTQFMFF. Over residues 552-565 the composition is skewed to low complexity; the sequence is STMTSSSSKDFSSS.

In terms of assembly, interacts with SYCE1. Interacts with proteasome subunit PSMA8; to participate in meiosis progression during spermatogenesis. As to expression, most abundantly expressed in testis. Also expressed in retina and skeletal muscle.

Its subcellular location is the chromosome. Functionally, meiotic protein that localizes to the central element of the synaptonemal complex and is required for chromosome synapsis during meiotic recombination. Required for the appropriate processing of intermediate recombination nodules before crossover formation. This is Protein SIX6OS1 (Six6os1) from Mus musculus (Mouse).